The following is a 581-amino-acid chain: Probable peptidoglycan D,D-transpeptidase PenA (581 aa).

A helical membrane pass occupies residues Ile28 to Tyr48. Residue Ser310 is the Acyl-ester intermediate of the active site.

It belongs to the transpeptidase family. FtsI subfamily.

The protein resides in the cell inner membrane. The enzyme catalyses Preferential cleavage: (Ac)2-L-Lys-D-Ala-|-D-Ala. Also transpeptidation of peptidyl-alanyl moieties that are N-acyl substituents of D-alanine.. The protein operates within cell wall biogenesis; peptidoglycan biosynthesis. Catalyzes cross-linking of the peptidoglycan cell wall at the division septum. The polypeptide is Probable peptidoglycan D,D-transpeptidase PenA (Neisseria meningitidis serogroup A / serotype 4A (strain DSM 15465 / Z2491)).